The sequence spans 155 residues: Ribosomal RNA large subunit methyltransferase H (155 aa).

Residues leucine 72, glycine 103, and 122-127 each bind S-adenosyl-L-methionine; that span reads LSDLTL.

Belongs to the RNA methyltransferase RlmH family. As to quaternary structure, homodimer.

The protein resides in the cytoplasm. It catalyses the reaction pseudouridine(1915) in 23S rRNA + S-adenosyl-L-methionine = N(3)-methylpseudouridine(1915) in 23S rRNA + S-adenosyl-L-homocysteine + H(+). Its function is as follows. Specifically methylates the pseudouridine at position 1915 (m3Psi1915) in 23S rRNA. This chain is Ribosomal RNA large subunit methyltransferase H, found in Paracidovorax citrulli (strain AAC00-1) (Acidovorax citrulli).